An 804-amino-acid chain; its full sequence is Leucine--tRNA ligase (804 aa).

A 'HIGH' region motif is present at residues 39 to 50 (PFPSGKGLHVGH). The 'KMSKS' region signature appears at 573 to 577 (KMSKS). Residue lysine 576 coordinates ATP.

This sequence belongs to the class-I aminoacyl-tRNA synthetase family.

It is found in the cytoplasm. It carries out the reaction tRNA(Leu) + L-leucine + ATP = L-leucyl-tRNA(Leu) + AMP + diphosphate. The protein is Leucine--tRNA ligase of Lactobacillus gasseri (strain ATCC 33323 / DSM 20243 / BCRC 14619 / CIP 102991 / JCM 1131 / KCTC 3163 / NCIMB 11718 / NCTC 13722 / AM63).